Consider the following 255-residue polypeptide: 5-oxoprolinase subunit A (255 aa).

Belongs to the LamB/PxpA family. As to quaternary structure, forms a complex composed of PxpA, PxpB and PxpC.

It carries out the reaction 5-oxo-L-proline + ATP + 2 H2O = L-glutamate + ADP + phosphate + H(+). Catalyzes the cleavage of 5-oxoproline to form L-glutamate coupled to the hydrolysis of ATP to ADP and inorganic phosphate. The protein is 5-oxoprolinase subunit A of Nitrobacter winogradskyi (strain ATCC 25391 / DSM 10237 / CIP 104748 / NCIMB 11846 / Nb-255).